The following is an 86-amino-acid chain: Acyl carrier protein (86 aa).

Residues 5-80 (EEILKKVQSI…EAVEFIIDKI (76 aa)) enclose the Carrier domain. At S40 the chain carries O-(pantetheine 4'-phosphoryl)serine.

Belongs to the acyl carrier protein (ACP) family. 4'-phosphopantetheine is transferred from CoA to a specific serine of apo-ACP by AcpS. This modification is essential for activity because fatty acids are bound in thioester linkage to the sulfhydryl of the prosthetic group.

Its subcellular location is the plastid. It is found in the chloroplast. Its pathway is lipid metabolism; fatty acid biosynthesis. Its function is as follows. Carrier of the growing fatty acid chain in fatty acid biosynthesis. In Cyanidium caldarium (Red alga), this protein is Acyl carrier protein.